Consider the following 293-residue polypeptide: 3-methyl-2-oxobutanoate hydroxymethyltransferase (293 aa).

The segment at 1-25 is disordered; sequence MTDSPTAGTPYGTLPPASPLPQRRP. Residues Asp67 and Asp110 each contribute to the Mg(2+) site. 3-methyl-2-oxobutanoate-binding positions include 67-68, Asp110, and Lys139; that span reads DS. Glu141 lines the Mg(2+) pocket. Glu208 (proton acceptor) is an active-site residue.

It belongs to the PanB family. As to quaternary structure, homodecamer; pentamer of dimers. Requires Mg(2+) as cofactor.

The protein localises to the cytoplasm. The catalysed reaction is 3-methyl-2-oxobutanoate + (6R)-5,10-methylene-5,6,7,8-tetrahydrofolate + H2O = 2-dehydropantoate + (6S)-5,6,7,8-tetrahydrofolate. Its pathway is cofactor biosynthesis; (R)-pantothenate biosynthesis; (R)-pantoate from 3-methyl-2-oxobutanoate: step 1/2. Functionally, catalyzes the reversible reaction in which hydroxymethyl group from 5,10-methylenetetrahydrofolate is transferred onto alpha-ketoisovalerate to form ketopantoate. The sequence is that of 3-methyl-2-oxobutanoate hydroxymethyltransferase from Acidovorax sp. (strain JS42).